The primary structure comprises 158 residues: D-aminoacyl-tRNA deacylase (158 aa).

The Gly-cisPro motif, important for rejection of L-amino acids motif lies at 143–144 (GP).

Belongs to the DTD family. In terms of assembly, homodimer.

It localises to the cytoplasm. It catalyses the reaction glycyl-tRNA(Ala) + H2O = tRNA(Ala) + glycine + H(+). The catalysed reaction is a D-aminoacyl-tRNA + H2O = a tRNA + a D-alpha-amino acid + H(+). In terms of biological role, an aminoacyl-tRNA editing enzyme that deacylates mischarged D-aminoacyl-tRNAs. Also deacylates mischarged glycyl-tRNA(Ala), protecting cells against glycine mischarging by AlaRS. Acts via tRNA-based rather than protein-based catalysis; rejects L-amino acids rather than detecting D-amino acids in the active site. By recycling D-aminoacyl-tRNA to D-amino acids and free tRNA molecules, this enzyme counteracts the toxicity associated with the formation of D-aminoacyl-tRNA entities in vivo and helps enforce protein L-homochirality. This is D-aminoacyl-tRNA deacylase from Solidesulfovibrio magneticus (strain ATCC 700980 / DSM 13731 / RS-1) (Desulfovibrio magneticus).